The sequence spans 269 residues: Hdr-like menaquinol oxidoreductase iron-sulfur subunit 1 (269 aa).

Positions 1–26 form a signal peptide, tat-type signal; it reads MMSRRKFLLLTGAAAAGAILTPQISA. [4Fe-4S] cluster-binding residues include cysteine 52, cysteine 55, cysteine 72, cysteine 76, cysteine 118, cysteine 121, cysteine 126, cysteine 130, cysteine 150, cysteine 153, cysteine 156, cysteine 160, cysteine 194, cysteine 197, cysteine 215, and cysteine 219. The 30-residue stretch at 141 to 170 folds into the 4Fe-4S ferredoxin-type domain; it reads GIVEIDMHRCIGCRYCMIACPYGARCFNFI.

Consists of five subunits: an integral membrane subunit, a cytochrome b-like subunit, a cytochrome c subunit and two iron-sulfur subunits. [4Fe-4S] cluster is required as a cofactor. In terms of processing, predicted to be exported by the Tat system. The position of the signal peptide cleavage has been experimentally proven.

The protein resides in the cell membrane. Functionally, has menaquinol-oxidizing activity. HmeA, HmeB and HmeE subunits may together catalyze electron transfer from menaquinol to cytochrome c. The protein is Hdr-like menaquinol oxidoreductase iron-sulfur subunit 1 (hmeA) of Archaeoglobus fulgidus (strain ATCC 49558 / DSM 4304 / JCM 9628 / NBRC 100126 / VC-16).